Reading from the N-terminus, the 678-residue chain is Glycine--tRNA ligase beta subunit (678 aa).

The protein belongs to the class-II aminoacyl-tRNA synthetase family. In terms of assembly, tetramer of two alpha and two beta subunits.

The protein resides in the cytoplasm. The enzyme catalyses tRNA(Gly) + glycine + ATP = glycyl-tRNA(Gly) + AMP + diphosphate. The sequence is that of Glycine--tRNA ligase beta subunit from Streptococcus pneumoniae (strain ATCC 700669 / Spain 23F-1).